The chain runs to 202 residues: Putative zinc finger protein ZK686.5 (202 aa).

Residues 43–63 (RKNVDNTSTRKPYSYKDRKRK) are disordered. C2H2-type zinc fingers lie at residues 110 to 133 (TYCE…GKVH), 138 to 160 (IECH…MKTH), and 169 to 192 (VQCE…DVSH).

It is found in the nucleus. This Caenorhabditis elegans protein is Putative zinc finger protein ZK686.5.